We begin with the raw amino-acid sequence, 436 residues long: UPF0597 protein DP0591 (436 aa).

This sequence belongs to the UPF0597 family.

The sequence is that of UPF0597 protein DP0591 from Desulfotalea psychrophila (strain LSv54 / DSM 12343).